The following is a 271-amino-acid chain: Chymotrypsin BII (271 aa).

The N-terminal stretch at 1-15 is a signal peptide; it reads MIGKLSLLLVCVAVA. Positions 16–45 are cleaved as a propeptide — activation peptide; that stretch reads SGNPAAGKPWHWKSPKPLVDPRIHVNATPR. The Peptidase S1 domain maps to 46-268; it reads IVGGVEATPH…YLDWIEQKTG (223 aa). A disulfide bridge links Cys-71 with Cys-87. Catalysis depends on charge relay system residues His-86 and Asp-132. 2 cysteine pairs are disulfide-bonded: Cys-196–Cys-209 and Cys-219–Cys-245. Ser-223 (charge relay system) is an active-site residue.

It belongs to the peptidase S1 family.

Its subcellular location is the secreted. It is found in the extracellular space. The catalysed reaction is Preferential cleavage: Tyr-|-Xaa, Trp-|-Xaa, Phe-|-Xaa, Leu-|-Xaa.. In terms of biological role, serine protease with chymotryptic and collagenolytic activities. This chain is Chymotrypsin BII, found in Penaeus vannamei (Whiteleg shrimp).